The primary structure comprises 336 residues: Methionine import ATP-binding protein MetN (336 aa).

Residues isoleucine 2–glycine 254 enclose the ABC transporter domain. Position 34–41 (glycine 34–serine 41) interacts with ATP.

This sequence belongs to the ABC transporter superfamily. Methionine importer (TC 3.A.1.24) family. As to quaternary structure, the complex is composed of two ATP-binding proteins (MetN), two transmembrane proteins (MetI) and a solute-binding protein (MetQ).

The protein resides in the cell inner membrane. The catalysed reaction is L-methionine(out) + ATP + H2O = L-methionine(in) + ADP + phosphate + H(+). It catalyses the reaction D-methionine(out) + ATP + H2O = D-methionine(in) + ADP + phosphate + H(+). Its function is as follows. Part of the ABC transporter complex MetNIQ involved in methionine import. Responsible for energy coupling to the transport system. The chain is Methionine import ATP-binding protein MetN from Campylobacter jejuni subsp. jejuni serotype O:2 (strain ATCC 700819 / NCTC 11168).